The sequence spans 139 residues: Probable disulfide formation protein C (139 aa).

A helical membrane pass occupies residues 8–27 (EYALLTAWGASFIATLGSLY). C37 and C40 form a disulfide bridge. 2 consecutive transmembrane segments (helical) span residues 42–61 (YQRIFMYPFVLWLGIAVAKK) and 68–85 (YSLPIASIGACISLYHYA). A disulfide bond links C99 and C104. A helical transmembrane segment spans residues 113–135 (GFVTIPFLALIGFITIAVCSFIV).

It belongs to the DsbB family. BdbC subfamily.

It localises to the cell membrane. Its function is as follows. Required for disulfide bond formation in some proteins. This chain is Probable disulfide formation protein C, found in Bacillus cereus (strain ATCC 14579 / DSM 31 / CCUG 7414 / JCM 2152 / NBRC 15305 / NCIMB 9373 / NCTC 2599 / NRRL B-3711).